Consider the following 330-residue polypeptide: Tryptophan--tRNA ligase (330 aa).

ATP-binding positions include Gln10–Ser12 and Gly18–Asn19. Residues Pro11 to Asn19 carry the 'HIGH' region motif. L-tryptophan is bound at residue Asp133. ATP is bound by residues Gly145 to Asp147, Ile184, and Lys193 to Ser197. Residues Lys193–Ser197 carry the 'KMSKS' region motif.

The protein belongs to the class-I aminoacyl-tRNA synthetase family. In terms of assembly, homodimer.

It localises to the cytoplasm. It carries out the reaction tRNA(Trp) + L-tryptophan + ATP = L-tryptophyl-tRNA(Trp) + AMP + diphosphate + H(+). Functionally, catalyzes the attachment of tryptophan to tRNA(Trp). The sequence is that of Tryptophan--tRNA ligase from Bacillus subtilis (strain 168).